Here is a 547-residue protein sequence, read N- to C-terminus: Carboxypeptidase N subunit 2 (547 aa).

An N-terminal signal peptide occupies residues 1–21 (MFPGAWLCWVSLLLLARLTQP). An LRRNT domain is found at 22 to 49 (CPVGCDCFGREVFCSDEQLADIPPDIPP). Asparagine 74, asparagine 111, and asparagine 119 each carry an N-linked (GlcNAc...) asparagine glycan. LRR repeat units follow at residues 98–119 (RLQDLEITGSPVSNLSAHIFSN), 122–143 (SLEKLTLDFDRLAGLPEDLFCH), 146–167 (ILESLQLQGNQLRTLPGRLFQS), 170–191 (DLRTLNLAQNLLTQLPKGAFQS), 194–215 (GLQMLKLSNNMLARLPEGALGS), 218–239 (SLQELFLDGNAITELSPHLFSQ), 242–263 (SLEMLWLQHNAICHLPVSLFSS), 266–287 (NLTFLSLKDNALRTLPEGLFAH), 290–311 (GLLHLSLSYNQLETIPEGAFTN), 314–335 (RLVSLTLSHNAITDLPEHVFRN), 338–359 (QLVKLSLDSNNLTALHPALFHN), and 362–383 (RLQLLNLSRNQLTTLPGGIFDT). Asparagine 266 and asparagine 311 each carry an N-linked (GlcNAc...) asparagine glycan. N-linked (GlcNAc...) asparagine glycans are attached at residues asparagine 348, asparagine 359, and asparagine 367. The LRRCT domain occupies 395–447 (NPWQCDCHLSYLTSWLRLYNNQISNTHTFCAGPAYLKGQLVPNLKQEQLICPV). Asparagine 520 carries an N-linked (GlcNAc...) asparagine glycan.

In terms of assembly, tetramer of two catalytic chains and two glycosylated inactive chains.

The protein resides in the secreted. In terms of biological role, the 83 kDa subunit binds and stabilizes the catalytic subunit at 37 degrees Celsius and keeps it in circulation. Under some circumstances it may be an allosteric modifier of the catalytic subunit. This chain is Carboxypeptidase N subunit 2 (Cpn2), found in Mus musculus (Mouse).